The chain runs to 286 residues: Shikimate dehydrogenase (NADP(+)) (286 aa).

Residues 22 to 24 (SLS) and Thr69 contribute to the shikimate site. Lys73 (proton acceptor) is an active-site residue. Glu85 is an NADP(+) binding site. Residues Asn94 and Asp109 each coordinate shikimate. Residues 133 to 137 (GAGGA) and Val231 each bind NADP(+). Tyr233 serves as a coordination point for shikimate. Gly254 is an NADP(+) binding site.

Belongs to the shikimate dehydrogenase family. As to quaternary structure, homodimer.

The enzyme catalyses shikimate + NADP(+) = 3-dehydroshikimate + NADPH + H(+). It functions in the pathway metabolic intermediate biosynthesis; chorismate biosynthesis; chorismate from D-erythrose 4-phosphate and phosphoenolpyruvate: step 4/7. Its function is as follows. Involved in the biosynthesis of the chorismate, which leads to the biosynthesis of aromatic amino acids. Catalyzes the reversible NADPH linked reduction of 3-dehydroshikimate (DHSA) to yield shikimate (SA). The polypeptide is Shikimate dehydrogenase (NADP(+)) (Alkaliphilus metalliredigens (strain QYMF)).